Reading from the N-terminus, the 425-residue chain is Isocitrate dehydrogenase [NADP] (425 aa).

Thr-114 lines the NADP(+) pocket. Residues Ser-123, Asn-125, Arg-129, Arg-139, and Arg-162 each contribute to the D-threo-isocitrate site. Asp-316 is a binding site for Mg(2+). NADP(+) is bound by residues 348 to 354, Asn-361, Tyr-400, and Arg-404; that span reads HGTAPKY.

This sequence belongs to the isocitrate and isopropylmalate dehydrogenases family. In terms of assembly, homodimer. It depends on Mg(2+) as a cofactor. Requires Mn(2+) as cofactor.

It carries out the reaction D-threo-isocitrate + NADP(+) = 2-oxoglutarate + CO2 + NADPH. Catalyzes the oxidative decarboxylation of isocitrate to 2-oxoglutarate and carbon dioxide with the concomitant reduction of NADP(+). The sequence is that of Isocitrate dehydrogenase [NADP] (icd) from Helicobacter pylori (strain J99 / ATCC 700824) (Campylobacter pylori J99).